A 317-amino-acid chain; its full sequence is Aspartate carbamoyltransferase catalytic subunit (317 aa).

Carbamoyl phosphate is bound by residues R66 and T67. K94 is an L-aspartate binding site. Residues R116, H144, and Q147 each contribute to the carbamoyl phosphate site. Residues R177 and R231 each contribute to the L-aspartate site. Carbamoyl phosphate is bound by residues G272 and P273.

This sequence belongs to the aspartate/ornithine carbamoyltransferase superfamily. ATCase family. In terms of assembly, heterododecamer (2C3:3R2) of six catalytic PyrB chains organized as two trimers (C3), and six regulatory PyrI chains organized as three dimers (R2).

It carries out the reaction carbamoyl phosphate + L-aspartate = N-carbamoyl-L-aspartate + phosphate + H(+). The protein operates within pyrimidine metabolism; UMP biosynthesis via de novo pathway; (S)-dihydroorotate from bicarbonate: step 2/3. Functionally, catalyzes the condensation of carbamoyl phosphate and aspartate to form carbamoyl aspartate and inorganic phosphate, the committed step in the de novo pyrimidine nucleotide biosynthesis pathway. The sequence is that of Aspartate carbamoyltransferase catalytic subunit from Bradyrhizobium sp. (strain BTAi1 / ATCC BAA-1182).